We begin with the raw amino-acid sequence, 142 residues long: Midkine-B (142 aa).

An N-terminal signal peptide occupies residues 1 to 20 (MELRAFCVILLITILAVSSQ). Disulfide bonds link Cys-36–Cys-60, Cys-44–Cys-69, Cys-51–Cys-73, Cys-83–Cys-115, and Cys-93–Cys-125.

It belongs to the pleiotrophin family. In terms of tissue distribution, in adults, expression is highest in the brain, eye and bone, with lower expression in the heart and lung. Not expressed in the ovary. In the tailbud stage embryo, expressed in the head and tail regions as well as in the central nervous system (CNS).

Its subcellular location is the secreted. In terms of biological role, secreted protein that functions as a cytokine and growth factor and mediates its signal through cell-surface proteoglycan and non-proteoglycan receptors. Binds cell-surface proteoglycan receptors via their chondroitin sulfate (CS) groups. Thereby regulates many processes like inflammatory response, cell proliferation, cell adhesion, cell growth, cell survival, tissue regeneration, cell differentiation and cell migration. Inhibits mesoderm formation and promotes neural formation during development. Plays a role in development of the neuromuscular junction (NMJ). Has antibacterial activity against both Gram-positive and Gram-negative bacteria. The polypeptide is Midkine-B (mdk-b) (Xenopus laevis (African clawed frog)).